Here is a 442-residue protein sequence, read N- to C-terminus: MPRARKGNTLRKGGQRRGGGARSSAQADSGSSDDEAASEARSTASECPSLLSTTAEDSLGGDVVDEQGQQEDLEEKLKEYVDCLTDKSAKTRQGALESLRLALASRLLPDFLLERRLTLADALEKCLKKGKGEEQALAAAVLGLLCVQLGPGPKGEELFHSLQPLLVSVLSDSTASPAARLHCASALGLGCYVAAADIQDLVSCLACLESVFSRFYGLGGSSTSPVVPASLHGLLSAALQAWALLLTICPSTQISHILDRQLPRLPQLLSSESVNLRIAAGETIALLFELARDLEEEFVYEDMEALCSVLRTLATDSNKYRAKADRRRQRSTFRAVLHSVEGGECEEEIVRFGFEVLYMDSWARHRIYAAFKEVLGSGMHHHLQNNELLRDIFGLGPVLLLDATALKACKVPRFEKHLYNAAAFKARTKARSRVRDKRADIL.

Residues 1–15 (MPRARKGNTLRKGGQ) show a composition bias toward basic residues. Positions 1–71 (MPRARKGNTL…DVVDEQGQQE (71 aa)) are disordered. Over residues 43–56 (TASECPSLLSTTAE) the composition is skewed to polar residues.

The protein belongs to the IFRD family. Associates with ribosomes; promoting ribosome inactivation. In terms of tissue distribution, expressed in many tissues including heart, brain, placenta, lung, liver, skeletal muscle, kidney and pancreas.

Its function is as follows. Ribosome-binding protein that acts as an inhibitor of mRNA translation by promoting ribosome inactivation. Associates with the P- and E-sites of the ribosome and inserts a C-terminal helix into the mRNA exit channel to preclude translation. This Homo sapiens (Human) protein is Interferon-related developmental regulator 2.